The following is a 3079-amino-acid chain: Inhibitory regulator protein IRA2 (3079 aa).

The segment at 392–554 (NQNAHQGSSS…RASYDAHKTG (163 aa)) is disordered. Positions 399-416 (SSSPSSSSPSSPPSSSSS) are enriched in low complexity. Residues 417 to 442 (DNNNQNIIAKSLSRQLSHHQSYIQQQ) are compositionally biased toward polar residues. Residues 449–477 (SSWTTNSQSSTSLSSSTSNSTTTDFSTHT) are compositionally biased toward low complexity. Residues 488–497 (DTPTMSNITI) are compositionally biased toward polar residues. Residues 498-528 (SASSLLSQTPTPTTQLQQRLNSAAAAAAAAA) show a composition bias toward low complexity. A compositionally biased stretch (polar residues) spans 529-546 (SPSNSTPTGYTAEQQSRA). Thr635 is subject to Phosphothreonine. 3 disordered regions span residues 867–898 (FKGS…PLGL), 912–935 (GSST…LSSD), and 952–980 (GPSS…VQRP). 2 stretches are compositionally biased toward low complexity: residues 873 to 894 (SLCS…TPVS) and 921 to 934 (NVNS…NLSS). Polar residues predominate over residues 961–980 (IPTTLTSPPGTEKSSPVQRP). In terms of domain architecture, Ras-GAP spans 1717–1922 (NATHIVVAQL…DRIFRFLAEL (206 aa)).

The protein localises to the cytoplasm. Functionally, inhibitory regulator of the Ras-cyclic AMP pathway. Stimulates the GTPase activity of Ras proteins. The polypeptide is Inhibitory regulator protein IRA2 (IRA2) (Saccharomyces cerevisiae (strain ATCC 204508 / S288c) (Baker's yeast)).